The primary structure comprises 517 residues: Crotonobetaine/carnitine--CoA ligase (517 aa).

This sequence belongs to the ATP-dependent AMP-binding enzyme family.

It carries out the reaction 4-(trimethylamino)butanoate + ATP + CoA = 4-(trimethylamino)butanoyl-CoA + AMP + diphosphate. It catalyses the reaction crotonobetaine + ATP + CoA = crotonobetainyl-CoA + AMP + diphosphate. The catalysed reaction is (R)-carnitine + ATP + CoA = (R)-carnitinyl-CoA + AMP + diphosphate. It participates in amine and polyamine metabolism; carnitine metabolism. Its function is as follows. Catalyzes the transfer of CoA to carnitine, generating the initial carnitinyl-CoA needed for the CaiB reaction cycle. Also has activity toward crotonobetaine and gamma-butyrobetaine. In Escherichia coli (strain K12 / MC4100 / BW2952), this protein is Crotonobetaine/carnitine--CoA ligase.